The following is a 130-amino-acid chain: Small ribosomal subunit protein uS8 (130 aa).

This sequence belongs to the universal ribosomal protein uS8 family. In terms of assembly, part of the 30S ribosomal subunit. Contacts proteins S5 and S12.

One of the primary rRNA binding proteins, it binds directly to 16S rRNA central domain where it helps coordinate assembly of the platform of the 30S subunit. In Opitutus terrae (strain DSM 11246 / JCM 15787 / PB90-1), this protein is Small ribosomal subunit protein uS8.